Here is a 215-residue protein sequence, read N- to C-terminus: UPF0319 protein VVA1446 (215 aa).

An N-terminal signal peptide occupies residues 1 to 21; sequence MNIIKPLTCILAMSISGLATA.

It belongs to the UPF0319 family.

The sequence is that of UPF0319 protein VVA1446 from Vibrio vulnificus (strain YJ016).